A 439-amino-acid chain; its full sequence is Probable eukaryotic translation initiation factor 5-1 (439 aa).

29–36 contacts GTP; sequence GRGNGIKT. The interval 143–245 is disordered; sequence LKNPPEQKKS…REAAEKRMKE (103 aa). Basic and acidic residues predominate over residues 147-186; it reads PEQKKSSKDKKSMRRAEKERLREGEAADEEMRKLKKEAAS. Residues 214–228 show a composition bias toward acidic residues; the sequence is DENDQADSEEDDDDV. Thr232 carries the phosphothreonine modification. Positions 234-245 are enriched in basic and acidic residues; it reads TSREAAEKRMKE. Residues 283–439 form the W2 domain; sequence KIPENAHEKL…QNAESESEEE (157 aa). Ser434 and Ser436 each carry phosphoserine.

This sequence belongs to the eIF-2-beta/eIF-5 family.

Catalyzes the hydrolysis of GTP bound to the 40S ribosomal initiation complex (40S.mRNA.Met-tRNA[F].eIF-2.GTP) with the subsequent joining of a 60S ribosomal subunit resulting in the release of eIF-2 and the guanine nucleotide. The subsequent joining of a 60S ribosomal subunit results in the formation of a functional 80S initiation complex (80S.mRNA.Met-tRNA[F]). This is Probable eukaryotic translation initiation factor 5-1 from Arabidopsis thaliana (Mouse-ear cress).